We begin with the raw amino-acid sequence, 458 residues long: Aldehyde dehydrogenase (458 aa).

Residues 134-135, 158-161, and 210-211 each bind NADP(+); these read WN, KHAS, and GS. Glutamate 232 (proton acceptor) is an active-site residue. Leucine 233 serves as a coordination point for NADP(+). The Nucleophile role is filled by cysteine 266. Glutamate 363 is a binding site for NADP(+).

The protein belongs to the aldehyde dehydrogenase family. As to quaternary structure, monomer.

It carries out the reaction an aldehyde + NAD(+) + H2O = a carboxylate + NADH + 2 H(+). The catalysed reaction is an aldehyde + NADP(+) + H2O = a carboxylate + NADPH + 2 H(+). The protein operates within carbohydrate metabolism; D-xylose degradation. Its function is as follows. Aldehyde dehydrogenase able to oxidize various aldehydes such as formaldehyde, glyceraldehyde, butyraldehyde, glutaraldehyde and benzaldehyde (in vitro). Is likely involved in the oxidative D-xylose degradation pathway, catalyzing the oxidation step of 2-oxoglutarate semialdehyde to 2-oxoglutarate. Is able to use both NAD(+) and NADP(+); however, shows a preference for NADP(+). Does not display succinate semialdehyde dehydrogenase activity. The sequence is that of Aldehyde dehydrogenase (aldh) from Paenarthrobacter nicotinovorans (Arthrobacter nicotinovorans).